The chain runs to 218 residues: GILT-like protein ZK669.3 (218 aa).

The N-terminal stretch at 1 to 21 is a signal peptide; that stretch reads MRRLNGVFICLILFITKISYA. N-linked (GlcNAc...) asparagine glycans are attached at residues Asn-129 and Asn-185.

It belongs to the GILT family.

It is found in the secreted. In Caenorhabditis elegans, this protein is GILT-like protein ZK669.3.